Here is a 62-residue protein sequence, read N- to C-terminus: Chromatin protein Cren7 2 (62 aa).

This sequence belongs to the Cren7 family. In terms of assembly, monomer. Post-translationally, methylated at multiple sites, to varying extents.

The protein localises to the chromosome. Its subcellular location is the cytoplasm. Its function is as follows. A chromatin protein, binds double-stranded DNA without sequence specificity. Constrains negative DNA supercoils. This is Chromatin protein Cren7 2 (cren7-2) from Hyperthermus butylicus (strain DSM 5456 / JCM 9403 / PLM1-5).